The primary structure comprises 362 residues: UDP-N-acetylglucosamine--N-acetylmuramyl-(pentapeptide) pyrophosphoryl-undecaprenol N-acetylglucosamine transferase (362 aa).

UDP-N-acetyl-alpha-D-glucosamine contacts are provided by residues 15–17 (TGG), Asn-127, Arg-165, Ser-191, Ile-247, 266–271 (ALTVSE), and Gln-292.

The protein belongs to the glycosyltransferase 28 family. MurG subfamily.

The protein resides in the cell inner membrane. The enzyme catalyses di-trans,octa-cis-undecaprenyl diphospho-N-acetyl-alpha-D-muramoyl-L-alanyl-D-glutamyl-meso-2,6-diaminopimeloyl-D-alanyl-D-alanine + UDP-N-acetyl-alpha-D-glucosamine = di-trans,octa-cis-undecaprenyl diphospho-[N-acetyl-alpha-D-glucosaminyl-(1-&gt;4)]-N-acetyl-alpha-D-muramoyl-L-alanyl-D-glutamyl-meso-2,6-diaminopimeloyl-D-alanyl-D-alanine + UDP + H(+). It participates in cell wall biogenesis; peptidoglycan biosynthesis. In terms of biological role, cell wall formation. Catalyzes the transfer of a GlcNAc subunit on undecaprenyl-pyrophosphoryl-MurNAc-pentapeptide (lipid intermediate I) to form undecaprenyl-pyrophosphoryl-MurNAc-(pentapeptide)GlcNAc (lipid intermediate II). In Shewanella oneidensis (strain ATCC 700550 / JCM 31522 / CIP 106686 / LMG 19005 / NCIMB 14063 / MR-1), this protein is UDP-N-acetylglucosamine--N-acetylmuramyl-(pentapeptide) pyrophosphoryl-undecaprenol N-acetylglucosamine transferase.